Reading from the N-terminus, the 452-residue chain is Probable intron-encoded endonuclease 2 (452 aa).

3 helical membrane-spanning segments follow: residues 1–21 (MNIT…NRKN), 22–42 (IILM…LILV), and 57–77 (IYII…LVAF). A ndh-4L exon 1 encoded region spans residues 1–80 (MNITLILFLI…LAILVAFYRL (80 aa)). The interval 81 to 452 (INSPVKNPRS…SLEGGMNKNI (372 aa)) is ndh-4L intron 1 encoded.

In the N-terminal section; belongs to the complex I subunit 4L family. The protein in the C-terminal section; belongs to the LAGLIDADG endonuclease family.

It localises to the mitochondrion membrane. In terms of biological role, mitochondrial DNA endonuclease involved in intron homing. The sequence is that of Probable intron-encoded endonuclease 2 from Neurospora crassa (strain ATCC 24698 / 74-OR23-1A / CBS 708.71 / DSM 1257 / FGSC 987).